A 739-amino-acid polypeptide reads, in one-letter code: Phosphoribosylformylglycinamidine synthase subunit PurL (739 aa).

His-54 is an active-site residue. Residues Tyr-57 and Lys-96 each coordinate ATP. Glu-98 provides a ligand contact to Mg(2+). Residues 99-102 and Arg-121 each bind substrate; that span reads SHNH. His-100 (proton acceptor) is an active-site residue. Asp-122 contacts Mg(2+). Gln-245 lines the substrate pocket. Asp-273 serves as a coordination point for Mg(2+). Position 317-319 (317-319) interacts with substrate; the sequence is ESQ. Asp-500 and Gly-537 together coordinate ATP. Asn-538 provides a ligand contact to Mg(2+). Ser-540 contributes to the substrate binding site.

This sequence belongs to the FGAMS family. Monomer. Part of the FGAM synthase complex composed of 1 PurL, 1 PurQ and 2 PurS subunits.

Its subcellular location is the cytoplasm. It carries out the reaction N(2)-formyl-N(1)-(5-phospho-beta-D-ribosyl)glycinamide + L-glutamine + ATP + H2O = 2-formamido-N(1)-(5-O-phospho-beta-D-ribosyl)acetamidine + L-glutamate + ADP + phosphate + H(+). The protein operates within purine metabolism; IMP biosynthesis via de novo pathway; 5-amino-1-(5-phospho-D-ribosyl)imidazole from N(2)-formyl-N(1)-(5-phospho-D-ribosyl)glycinamide: step 1/2. Its function is as follows. Part of the phosphoribosylformylglycinamidine synthase complex involved in the purines biosynthetic pathway. Catalyzes the ATP-dependent conversion of formylglycinamide ribonucleotide (FGAR) and glutamine to yield formylglycinamidine ribonucleotide (FGAM) and glutamate. The FGAM synthase complex is composed of three subunits. PurQ produces an ammonia molecule by converting glutamine to glutamate. PurL transfers the ammonia molecule to FGAR to form FGAM in an ATP-dependent manner. PurS interacts with PurQ and PurL and is thought to assist in the transfer of the ammonia molecule from PurQ to PurL. This chain is Phosphoribosylformylglycinamidine synthase subunit PurL, found in Bacillus cereus (strain ATCC 14579 / DSM 31 / CCUG 7414 / JCM 2152 / NBRC 15305 / NCIMB 9373 / NCTC 2599 / NRRL B-3711).